A 108-amino-acid polypeptide reads, in one-letter code: uncharacterized protein (108 aa).

3 helical membrane-spanning segments follow: residues 10–32 (SLCY…FVVN), 45–67 (ISHI…GAVA), and 77–99 (FVII…WNVI).

It localises to the cell membrane. This is an uncharacterized protein from Bacillus subtilis (strain 168).